A 238-amino-acid chain; its full sequence is uncharacterized protein (238 aa).

This is an uncharacterized protein from Ictaluridae (bullhead catfishes).